The sequence spans 293 residues: ATP synthase gamma chain (293 aa).

This sequence belongs to the ATPase gamma chain family. F-type ATPases have 2 components, CF(1) - the catalytic core - and CF(0) - the membrane proton channel. CF(1) has five subunits: alpha(3), beta(3), gamma(1), delta(1), epsilon(1). CF(0) has three main subunits: a, b and c.

It localises to the cell membrane. Produces ATP from ADP in the presence of a proton gradient across the membrane. The gamma chain is believed to be important in regulating ATPase activity and the flow of protons through the CF(0) complex. This Streptococcus agalactiae serotype III (strain NEM316) protein is ATP synthase gamma chain.